The sequence spans 132 residues: UPF0292 protein PH1700 (132 aa).

The Toprim domain maps to 20-100; sequence EGAIIVEGAR…KVDTETRREL (81 aa). Residues Glu26, Asp69, and Asp71 each coordinate Mg(2+).

The protein belongs to the UPF0292 family. The cofactor is Mg(2+).

The chain is UPF0292 protein PH1700 from Pyrococcus horikoshii (strain ATCC 700860 / DSM 12428 / JCM 9974 / NBRC 100139 / OT-3).